A 353-amino-acid polypeptide reads, in one-letter code: Photosystem II protein D1 (353 aa).

T2 bears the N-acetylthreonine mark. A Phosphothreonine modification is found at T2. 3 helical membrane-spanning segments follow: residues 29–46 (YIGW…TATS), 118–133 (HFLL…EWEL), and 142–156 (WIAV…AATA). H118 contacts chlorophyll a. Y126 contributes to the pheophytin a binding site. Residues D170 and E189 each contribute to the [CaMn4O5] cluster site. Residues 197–218 (FHMLGVAGVFGGSLFSAMHGSL) form a helical membrane-spanning segment. H198 contacts chlorophyll a. Residues H215 and 264-265 (SF) contribute to the a quinone site. H215 provides a ligand contact to Fe cation. H272 is a Fe cation binding site. The helical transmembrane segment at 274-288 (FLAAWPVVGIWFTAL) threads the bilayer. [CaMn4O5] cluster contacts are provided by H332, E333, D342, and A344. Residues 345 to 353 (AVEAPSTNG) constitute a propeptide that is removed on maturation.

This sequence belongs to the reaction center PufL/M/PsbA/D family. As to quaternary structure, PSII is composed of 1 copy each of membrane proteins PsbA, PsbB, PsbC, PsbD, PsbE, PsbF, PsbH, PsbI, PsbJ, PsbK, PsbL, PsbM, PsbT, PsbX, PsbY, PsbZ, Psb30/Ycf12, at least 3 peripheral proteins of the oxygen-evolving complex and a large number of cofactors. It forms dimeric complexes. The D1/D2 heterodimer binds P680, chlorophylls that are the primary electron donor of PSII, and subsequent electron acceptors. It shares a non-heme iron and each subunit binds pheophytin, quinone, additional chlorophylls, carotenoids and lipids. D1 provides most of the ligands for the Mn4-Ca-O5 cluster of the oxygen-evolving complex (OEC). There is also a Cl(-1) ion associated with D1 and D2, which is required for oxygen evolution. The PSII complex binds additional chlorophylls, carotenoids and specific lipids. serves as cofactor. In terms of processing, tyr-161 forms a radical intermediate that is referred to as redox-active TyrZ, YZ or Y-Z. C-terminally processed by CTPA; processing is essential to allow assembly of the oxygen-evolving complex and thus photosynthetic growth.

Its subcellular location is the plastid. It is found in the chloroplast thylakoid membrane. The catalysed reaction is 2 a plastoquinone + 4 hnu + 2 H2O = 2 a plastoquinol + O2. Functionally, photosystem II (PSII) is a light-driven water:plastoquinone oxidoreductase that uses light energy to abstract electrons from H(2)O, generating O(2) and a proton gradient subsequently used for ATP formation. It consists of a core antenna complex that captures photons, and an electron transfer chain that converts photonic excitation into a charge separation. The D1/D2 (PsbA/PsbD) reaction center heterodimer binds P680, the primary electron donor of PSII as well as several subsequent electron acceptors. The protein is Photosystem II protein D1 of Lepidium virginicum (Virginia pepperweed).